Reading from the N-terminus, the 276-residue chain is RRP15-like protein (276 aa).

2 disordered regions span residues Met-1 to Val-132 and Lys-201 to Glu-276. 2 stretches are compositionally biased toward basic and acidic residues: residues Phe-75 to Val-95 and Lys-226 to Thr-245. Positions Glu-254–Glu-276 are enriched in acidic residues. A Phosphoserine modification is found at Ser-269. Position 271 is a phosphotyrosine (Tyr-271).

It belongs to the RRP15 family.

The polypeptide is RRP15-like protein (Drosophila melanogaster (Fruit fly)).